The following is a 262-amino-acid chain: Zinc finger protein ehn-3 (262 aa).

4 consecutive C2H2-type zinc fingers follow at residues 2–24 (EKCD…KVMH), 30–52 (FECQ…MMTH), 59–84 (FECP…DSEH), and 92–115 (AKCK…HTAH). A disordered region spans residues 179 to 204 (SVKSAKELSPTPSTEIETPEEEELDG). Residues 185–194 (ELSPTPSTEI) are compositionally biased toward low complexity. Acidic residues predominate over residues 195–204 (ETPEEEELDG). 2 C2H2-type zinc fingers span residues 208–230 (WYCD…SGLH) and 236–260 (FKCS…YANH).

This sequence belongs to the krueppel C2H2-type zinc-finger protein family.

It is found in the nucleus. Functionally, together with the zinc finger protein ztf-16, plays a role in gonadogenesis, specifically in somatic gonad precursor cell development. This is possibly by regulating tra-1 gene expression. Its function is as follows. Required for proper gonadal primordium assembly and somatic gonad precursor cell morphology. This Caenorhabditis elegans protein is Zinc finger protein ehn-3.